A 129-amino-acid chain; its full sequence is GEL complex subunit OPTI (129 aa).

Residues 1-44 (MSGGRRKEEPPQPQLANGALKVSVWSKVLRSDAAWDDKDEFLDV) lie on the Cytoplasmic side of the membrane. A helical membrane pass occupies residues 45 to 65 (IYWFRQIIALVLGVIWGVLPL). Residue Arg-66 is a topological domain, lumenal. Residues 67 to 84 (GFLGIAGFCLINAGVLYL) traverse the membrane as a helical segment. At 85-103 (YFSNYLQIDEEEYGGTWEL) the chain is on the cytoplasmic side. The chain crosses the membrane as a helical span at residues 104 to 127 (TKEGFMTSFALFMVIWIIFYTAIH). The Lumenal portion of the chain corresponds to 128-129 (YD).

This sequence belongs to the EMC6 family. As to quaternary structure, component of the GET- and EMC-like (GEL) complex, composed of RAB5IF/OPTI and TMCO1. The GEL complex is part of the multi-pass translocon (MPT) complex, composed of three subcomplexes, the GEL complex (composed of RAB5IF/OPTI and TMCO1), the BOS complex (composed of NCLN/Nicalin, NOMO1 and TMEM147) and the PAT complex (composed of WDR83OS/Asterix and CCDC47). The MPT complex associates with the SEC61 complex. Interacts with NDUFS3, NDUFA4, NDUFV1, NDUFA9 and NDUFS8 of the mitochondrial membrane respiratory chain NADH dehydrogenase (Complex I). Interacts with UQCRC2 of the ubiquinol-cytochrome c reductase complex (Complex III). Interacts with COX5A and COX7C of the cytochrome c oxidase complex (Complex IV). In terms of tissue distribution, expressed in neuronal cells.

The protein localises to the endoplasmic reticulum membrane. The protein resides in the mitochondrion inner membrane. Functionally, component of the multi-pass translocon (MPT) complex that mediates insertion of multi-pass membrane proteins into the lipid bilayer of membranes. The MPT complex takes over after the SEC61 complex: following membrane insertion of the first few transmembrane segments of proteins by the SEC61 complex, the MPT complex occludes the lateral gate of the SEC61 complex to promote insertion of subsequent transmembrane regions. Within the MPT complex, the GEL subcomplex may mediate insertion of transmembrane regions into the membrane. In addition to its role in multi-pass membrane insertion, RAB5IF/OPTI also acts as an assembly factor for mitochondrial respiratory complexes. This is GEL complex subunit OPTI from Mus musculus (Mouse).